The following is a 1192-amino-acid chain: Protein pangolin, isoform J (1192 aa).

The Nuclear localization signal motif lies at 351–357 (LGLPSEE). Residues 691–713 (AKHTSNAQSNESKETTNDKKKPH) form a disordered region. Positions 714–782 (IKKPLNAFML…LHMELYPGWS (69 aa)) form a DNA-binding region, HMG box. 4 disordered regions span residues 790–812 (VSKK…NMKK), 847–916 (PAED…SPST), 955–986 (QRPT…VSPV), and 1136–1192 (QLNN…ISVS). Over residues 862 to 871 (SDDDEDDYDD) the composition is skewed to acidic residues. 2 stretches are compositionally biased toward low complexity: residues 898 to 915 (SMPS…QSPS) and 957 to 986 (PTLV…VSPV). Polar residues-rich tracts occupy residues 1140–1162 (RTEN…VNSS) and 1170–1192 (SQAI…ISVS).

The protein belongs to the TCF/LEF family. As to quaternary structure, binds to the beta-catenin homolog arm or to gro.

Its subcellular location is the nucleus. Its function is as follows. Segment polarity protein. Functions together with arm to transduce the Wingless (Wg) signal in embryos and in developing adult tissues. Acts as a transcriptional activator, but in the absence of arm, it binds to gro and acts as a transcriptional repressor of wg-responsive genes. The protein is Protein pangolin, isoform J of Drosophila melanogaster (Fruit fly).